The chain runs to 256 residues: MRYALGVEYDGSDFRGWQNLGEGGPSVQASLEQALSSVADTPLQVVCAGRTDAGVHGQCQVVHFDTDVVRDPRAWMLGTTTRLPRSIAVRWCVPVADDFHARFSARARRYRYRLLNREVRPALERQTLSWERRALDETRMHIAGQALLGENDFNAFRSVQCQALHARRELQSLQVSRHGEVIEVSVQGNAFLHHMVRNIVGSLILVGSGEKPVEWIAELLAGRDRTVAGPTAPPQGLVFLGPLYPDNWHLPAEVTL.

Residue D52 is the Nucleophile of the active site. Y110 contacts substrate.

Belongs to the tRNA pseudouridine synthase TruA family. Homodimer.

It carries out the reaction uridine(38/39/40) in tRNA = pseudouridine(38/39/40) in tRNA. Formation of pseudouridine at positions 38, 39 and 40 in the anticodon stem and loop of transfer RNAs. In Stenotrophomonas maltophilia (strain R551-3), this protein is tRNA pseudouridine synthase A.